The following is a 376-amino-acid chain: Lipoyl synthase, mitochondrial (376 aa).

Residues cysteine 102, cysteine 107, cysteine 113, cysteine 133, cysteine 137, cysteine 140, and serine 348 each coordinate [4Fe-4S] cluster. Residues 116–337 (GGEDKTATAT…EEVGGEMGFA (222 aa)) form the Radical SAM core domain.

The protein belongs to the radical SAM superfamily. Lipoyl synthase family. The cofactor is [4Fe-4S] cluster.

It localises to the mitochondrion. The catalysed reaction is [[Fe-S] cluster scaffold protein carrying a second [4Fe-4S](2+) cluster] + N(6)-octanoyl-L-lysyl-[protein] + 2 oxidized [2Fe-2S]-[ferredoxin] + 2 S-adenosyl-L-methionine + 4 H(+) = [[Fe-S] cluster scaffold protein] + N(6)-[(R)-dihydrolipoyl]-L-lysyl-[protein] + 4 Fe(3+) + 2 hydrogen sulfide + 2 5'-deoxyadenosine + 2 L-methionine + 2 reduced [2Fe-2S]-[ferredoxin]. It participates in protein modification; protein lipoylation via endogenous pathway; protein N(6)-(lipoyl)lysine from octanoyl-[acyl-carrier-protein]: step 2/2. Functionally, catalyzes the radical-mediated insertion of two sulfur atoms into the C-6 and C-8 positions of the octanoyl moiety bound to the lipoyl domains of lipoate-dependent enzymes, thereby converting the octanoylated domains into lipoylated derivatives. The sequence is that of Lipoyl synthase, mitochondrial from Branchiostoma floridae (Florida lancelet).